Consider the following 340-residue polypeptide: Aspartate-semialdehyde dehydrogenase (340 aa).

Residues 11-14 (TGEV) and 39-40 (RS) each bind NADP(+). Phosphate is bound at residue R100. The active-site Acyl-thioester intermediate is C131. Q158 serves as a coordination point for substrate. 161–162 (SG) is an NADP(+) binding site. K216 serves as a coordination point for phosphate. R238 contributes to the substrate binding site. H245 (proton acceptor) is an active-site residue. N318 contacts NADP(+).

It belongs to the aspartate-semialdehyde dehydrogenase family. In terms of assembly, homodimer.

The enzyme catalyses L-aspartate 4-semialdehyde + phosphate + NADP(+) = 4-phospho-L-aspartate + NADPH + H(+). The protein operates within amino-acid biosynthesis; L-lysine biosynthesis via DAP pathway; (S)-tetrahydrodipicolinate from L-aspartate: step 2/4. Its pathway is amino-acid biosynthesis; L-methionine biosynthesis via de novo pathway; L-homoserine from L-aspartate: step 2/3. It participates in amino-acid biosynthesis; L-threonine biosynthesis; L-threonine from L-aspartate: step 2/5. Its function is as follows. Catalyzes the NADPH-dependent formation of L-aspartate-semialdehyde (L-ASA) by the reductive dephosphorylation of L-aspartyl-4-phosphate. This Aquifex aeolicus (strain VF5) protein is Aspartate-semialdehyde dehydrogenase.